The sequence spans 1074 residues: Formin-G (1074 aa).

The GBD/FH3 domain occupies 34 to 423; the sequence is LQMQQGSKTY…DKINEFEKKI (390 aa). Disordered stretches follow at residues 476–507 and 549–639; these read QSIS…DIQS and FTPT…NPSS. Residues 481-503 show a composition bias toward low complexity; that stretch reads SQDSSNNQKASSSSSNTSTLNDS. A coiled-coil region spans residues 502-530; the sequence is DSDIQSIQSSLKEATLEIERLKLAIEEKM. The segment covering 549–561 has biased composition (polar residues); that stretch reads FTPTSPDISNDGQ. Pro residues predominate over residues 568–610; it reads APPPSPSPPPPISGGGAPPPPPPPPPPPSGGGAPPPPPPPPPS. The region spanning 597-623 is the FH1 domain; sequence GGGAPPPPPPPPPSGGKKAGAPGAPPT. An FH2 domain is found at 631 to 1031; sequence NKPVINPSSK…ASGDNGAVQN (401 aa). The stretch at 914 to 971 forms a coiled coil; that stretch reads DINDLEKQFNISKNNCKKVLEANIPSSSKFQSTIGSFLEKTEIDIKNLKENQKNIVDS. The DAD domain maps to 1037-1073; it reads GADPLAALANAIKLGQTGLRKRPGPENSSGGSQLNLN. A disordered region spans residues 1053–1074; the sequence is TGLRKRPGPENSSGGSQLNLNK. The span at 1062 to 1074 shows a compositional bias: polar residues; it reads ENSSGGSQLNLNK.

The protein belongs to the formin homology family. Diaphanous subfamily. As to quaternary structure, interacts (via GBD/FH3 domain) with activated Rho-GTPases.

Functionally, formins play an important role in the nucleation of actin and the formation of linear actin filaments. This Dictyostelium discoideum (Social amoeba) protein is Formin-G (forG).